Here is a 413-residue protein sequence, read N- to C-terminus: Multifunctional CCA protein (413 aa).

ATP is bound by residues Gly-8 and Arg-11. Gly-8 and Arg-11 together coordinate CTP. Mg(2+) contacts are provided by Asp-21 and Asp-23. ATP contacts are provided by Arg-91, Arg-143, and Arg-146. CTP contacts are provided by Arg-91, Arg-143, and Arg-146. The 102-residue stretch at Thr-232 to Leu-333 folds into the HD domain.

It belongs to the tRNA nucleotidyltransferase/poly(A) polymerase family. Bacterial CCA-adding enzyme type 1 subfamily. Monomer. Can also form homodimers and oligomers. It depends on Mg(2+) as a cofactor. Ni(2+) serves as cofactor.

The catalysed reaction is a tRNA precursor + 2 CTP + ATP = a tRNA with a 3' CCA end + 3 diphosphate. It catalyses the reaction a tRNA with a 3' CCA end + 2 CTP + ATP = a tRNA with a 3' CCACCA end + 3 diphosphate. Functionally, catalyzes the addition and repair of the essential 3'-terminal CCA sequence in tRNAs without using a nucleic acid template. Adds these three nucleotides in the order of C, C, and A to the tRNA nucleotide-73, using CTP and ATP as substrates and producing inorganic pyrophosphate. tRNA 3'-terminal CCA addition is required both for tRNA processing and repair. Also involved in tRNA surveillance by mediating tandem CCA addition to generate a CCACCA at the 3' terminus of unstable tRNAs. While stable tRNAs receive only 3'-terminal CCA, unstable tRNAs are marked with CCACCA and rapidly degraded. The polypeptide is Multifunctional CCA protein (Burkholderia cenocepacia (strain ATCC BAA-245 / DSM 16553 / LMG 16656 / NCTC 13227 / J2315 / CF5610) (Burkholderia cepacia (strain J2315))).